The primary structure comprises 475 residues: Fez family zinc finger protein 1 (475 aa).

The Engrailed homology 1 repressor signature appears at 28–43 (PLAFSIERIMARTPEP). 6 C2H2-type zinc fingers span residues 260-282 (FTCE…MPVH), 288-310 (FVCK…KIIH), 316-338 (HKCN…TRIH), 344-366 (FVCE…KLTH), 372-394 (FKCN…MHTH), and 400-423 (FTCP…RKLH). The segment at 428–475 (GLARTPAGEPGTEPPPPLPQQPPMTLPPLQPPLPTPGPLQPGLHQGHQ) is disordered. Over residues 439–466 (TEPPPPLPQQPPMTLPPLQPPLPTPGPL) the composition is skewed to pro residues.

The protein belongs to the krueppel C2H2-type zinc-finger protein family. Expressed in brain. Little or no expression in other tissues. Overexpressed specifically in gastric cancers. A 2- to 20-fold increase is found in over 50% of gastric cancer tissues.

Its subcellular location is the nucleus. In terms of biological role, transcription repressor. Involved in the axonal projection and proper termination of olfactory sensory neurons (OSN). Plays a role in rostro-caudal patterning of the diencephalon and in prethalamic formation. Expression is required in OSN to cell-autonomously regulate OSN axon projections. Regulates non-cell-autonomously the layer formation of the olfactory bulb development and the interneurons. May be required for correct rostral migration of the interneuron progenitors. This chain is Fez family zinc finger protein 1 (FEZF1), found in Homo sapiens (Human).